A 437-amino-acid polypeptide reads, in one-letter code: Purple acid phosphatase 21 (437 aa).

An N-terminal signal peptide occupies residues 1–25 (MKKMKIFGFLISFSLFFLSPFVCQA). Asn30 carries an N-linked (GlcNAc...) asparagine glycan. Residues Asp152, Asp179, and Tyr182 each coordinate Fe cation. Asp179 provides a ligand contact to Zn(2+). 2 residues coordinate Zn(2+): Asn212 and His296. Substrate is bound at residue Asn212. His306 acts as the Proton donor in catalysis. His333 serves as a coordination point for Zn(2+). 333–335 (HVH) contributes to the substrate binding site. His335 provides a ligand contact to Fe cation.

Belongs to the metallophosphoesterase superfamily. Purple acid phosphatase family. Homodimer. Requires Fe cation as cofactor. It depends on Zn(2+) as a cofactor. In terms of tissue distribution, expressed flowers and siliques.

It localises to the secreted. The enzyme catalyses a phosphate monoester + H2O = an alcohol + phosphate. The polypeptide is Purple acid phosphatase 21 (PAP21) (Arabidopsis thaliana (Mouse-ear cress)).